The chain runs to 345 residues: 3-isopropylmalate dehydrogenase (345 aa).

74–87 (GPKWDGLPRKIRPE) lines the NAD(+) pocket. 4 residues coordinate substrate: Arg-94, Arg-104, Arg-132, and Asp-217. Positions 217, 241, and 245 each coordinate Mg(2+). Residue 274 to 286 (GSAPDIAGKGLAN) participates in NAD(+) binding.

The protein belongs to the isocitrate and isopropylmalate dehydrogenases family. LeuB type 1 subfamily. As to quaternary structure, homodimer. Requires Mg(2+) as cofactor. The cofactor is Mn(2+).

The protein resides in the cytoplasm. It catalyses the reaction (2R,3S)-3-isopropylmalate + NAD(+) = 4-methyl-2-oxopentanoate + CO2 + NADH. Its pathway is amino-acid biosynthesis; L-leucine biosynthesis; L-leucine from 3-methyl-2-oxobutanoate: step 3/4. Functionally, catalyzes the oxidation of 3-carboxy-2-hydroxy-4-methylpentanoate (3-isopropylmalate) to 3-carboxy-4-methyl-2-oxopentanoate. The product decarboxylates to 4-methyl-2 oxopentanoate. This is 3-isopropylmalate dehydrogenase (leuB) from Thermus thermophilus (strain ATCC BAA-163 / DSM 7039 / HB27).